Here is a 328-residue protein sequence, read N- to C-terminus: Nickel import system permease protein NikB (328 aa).

Helical transmembrane passes span 11–31, 104–124, 139–159, 170–190, 229–249, and 279–299; these read LMQM…LMKL, LLIS…LGII, VIST…LLFI, ILSQ…AYII, ILPI…GTVV, and VLFI…LTLL. One can recognise an ABC transmembrane type-1 domain in the interval 100–297; the sequence is APITLLISFS…IINTIADLLT (198 aa).

The protein belongs to the binding-protein-dependent transport system permease family. OppBC subfamily. In terms of assembly, the complex is composed of two ATP-binding proteins (NikD and NikE), two transmembrane proteins (NikB and NikC) and a solute-binding protein (NikA).

It is found in the cell membrane. In terms of biological role, part of the ABC transporter complex NikABCDE (Opp2) involved in nickel import. Probably responsible for the translocation of the substrate across the membrane. This is Nickel import system permease protein NikB from Staphylococcus aureus (strain Mu50 / ATCC 700699).